The primary structure comprises 110 residues: Iron-sulfur cluster assembly protein CyaY (110 aa).

This sequence belongs to the frataxin family.

Involved in iron-sulfur (Fe-S) cluster assembly. May act as a regulator of Fe-S biogenesis. This chain is Iron-sulfur cluster assembly protein CyaY, found in Azotobacter vinelandii (strain DJ / ATCC BAA-1303).